Reading from the N-terminus, the 475-residue chain is CAAX prenyl protease 1 homolog (475 aa).

The Lumenal portion of the chain corresponds to 1-18 (MGMWASVDAMWDFPAEKR). The chain crosses the membrane as a helical span at residues 19–39 (IFGAVLLFSWTVYLWETFLAQ). Residues 40-81 (RQRRIYKTTTRVPAELEQIMDSDTFEKSRLYQLDKSTFSFWS) are Nuclear-facing. A helical membrane pass occupies residues 82–102 (GLYSEVEGTFILLFGGIPYLW). Topologically, residues 103–123 (RLSGQFCSSAGFGPEYEIIQS) are lumenal. The helical transmembrane segment at 124-144 (LVFLLLATLFSALTGLPWSLY) threads the bilayer. Residues 145–170 (NTFVIEEKHGFNHQTLEFFMKDAIKK) are Nuclear-facing. A helical membrane pass occupies residues 171 to 191 (FIVTQCILLPVSALLLYIIKI). The Lumenal portion of the chain corresponds to 192 to 195 (GGDY). The helical transmembrane segment at 196-216 (FFIYAWLFTLVVSLVLVTIYA) threads the bilayer. The Nuclear portion of the chain corresponds to 217–347 (DYIAPLFDKF…GHWKLGHTVK (131 aa)). The segment at 293–314 (DNQEESGMEARNEGEGDSEEVK) is disordered. A compositionally biased stretch (basic and acidic residues) spans 300-314 (MEARNEGEGDSEEVK). Residue His-335 coordinates Zn(2+). The active site involves Glu-336. Residue His-339 participates in Zn(2+) binding. The helical transmembrane segment at 348–368 (NIIISQMNSFLCFFLFAVLIG) threads the bilayer. Topologically, residues 369–382 (RRELFAAFGFYDSQ) are lumenal. The helical transmembrane segment at 383–405 (PTLIGLLIIFQFIFSPYNEVLSF) threads the bilayer. The Nuclear portion of the chain corresponds to 406 to 475 (CLTVLSRRFE…LQALKNAKQD (70 aa)). Position 415 (Glu-415) interacts with Zn(2+).

It belongs to the peptidase M48A family. Zn(2+) serves as cofactor.

The protein localises to the endoplasmic reticulum membrane. Its subcellular location is the nucleus inner membrane. It localises to the early endosome membrane. It is found in the late endosome membrane. It catalyses the reaction Hydrolyzes the peptide bond -P2-(S-farnesyl or geranylgeranyl)C-P1'-P2'-P3'-COOH where P1' and P2' are amino acids with aliphatic side chains and P3' is any C-terminal residue.. With respect to regulation, inhibited by HIV protease inhibitors, such as lopinavir, tipranavir and nelfinavir, leading to defects in lamin A/LMNA maturation and accumulation of prelamin-A/C precursors in cells. This causes defects in nuclear envelope integrity and release of DNA in the cytosol, activating the AIM2 inflammasome. Transmembrane metalloprotease whose catalytic activity is critical for processing lamin A/LMNA on the inner nuclear membrane and clearing clogged translocons on the endoplasmic reticulum. Proteolytically removes the C-terminal three residues of farnesylated proteins. Also plays an antiviral role independently of its protease activity by restricting enveloped RNA and DNA viruses. Mechanistically, controls IFITM antiviral pathway to hinder viruses from breaching the endosomal barrier by modulating membrane fluidity. This chain is CAAX prenyl protease 1 homolog, found in Mus musculus (Mouse).